Reading from the N-terminus, the 316-residue chain is Apolipoprotein E (316 aa).

The first 18 residues, 1-18, serve as a signal peptide directing secretion; the sequence is MKVLWVALVVALLAGCQA. 8 repeat units span residues 79–100, 101–122, 123–144, 145–166, 167–188, 189–210, 211–232, and 233–254. Positions 79–254 are 8 X 22 AA approximate tandem repeats; the sequence is VLMEETMKEV…RLDKMRQQLE (176 aa). A Methionine sulfoxide modification is found at Met-142. At Ser-146 the chain carries Phosphoserine. The LDL and other lipoprotein receptors binding stretch occupies residues 157–167; it reads HLRKLRKRLLR. 161–164 is a binding site for heparin; the sequence is LRKR. Positions 209–289 are lipid-binding and lipoprotein association; that stretch reads AATLSTQVGQ…SWFEPLVEDM (81 aa). The O-linked (GalNAc...) threonine glycan is linked to Thr-211. 228 to 235 lines the heparin pocket; sequence RQKLHGRL. The interval 265 to 316 is homooligomerization; it reads SQIRLQAEAFQARLRSWFEPLVEDMQRQWAGLVEKVQLALHLSPTSPPSENH. Residues 277-289 are specificity for association with VLDL; it reads RLRSWFEPLVEDM.

Belongs to the apolipoprotein A1/A4/E family. In terms of assembly, homotetramer. May interact with ABCA1; functionally associated with ABCA1 in the biogenesis of HDLs. May interact with APP/A4 amyloid-beta peptide; the interaction is extremely stable in vitro but its physiological significance is unclear. May interact with MAPT. May interact with MAP2. In the cerebrospinal fluid, interacts with secreted SORL1. Interacts with PMEL; this allows the loading of PMEL luminal fragment on ILVs to induce fibril nucleation. Post-translationally, APOE exists as multiple glycosylated and sialylated glycoforms within cells and in plasma. The extent of glycosylation and sialylation are tissue and context specific. In terms of processing, glycated in plasma VLDL. Phosphorylated by FAM20C in the extracellular medium.

Its subcellular location is the secreted. It is found in the extracellular space. It localises to the extracellular matrix. The protein localises to the extracellular vesicle. The protein resides in the endosome. Its subcellular location is the multivesicular body. Its function is as follows. APOE is an apolipoprotein, a protein associating with lipid particles, that mainly functions in lipoprotein-mediated lipid transport between organs via the plasma and interstitial fluids. APOE is a core component of plasma lipoproteins and is involved in their production, conversion and clearance. Apolipoproteins are amphipathic molecules that interact both with lipids of the lipoprotein particle core and the aqueous environment of the plasma. As such, APOE associates with chylomicrons, chylomicron remnants, very low density lipoproteins (VLDL) and intermediate density lipoproteins (IDL) but shows a preferential binding to high-density lipoproteins (HDL). It also binds a wide range of cellular receptors including the LDL receptor/LDLR and the very low-density lipoprotein receptor/VLDLR that mediate the cellular uptake of the APOE-containing lipoprotein particles. Finally, APOE also has a heparin-binding activity and binds heparan-sulfate proteoglycans on the surface of cells, a property that supports the capture and the receptor-mediated uptake of APOE-containing lipoproteins by cells. This Ovis aries musimon (Mouflon) protein is Apolipoprotein E (APOE).